The sequence spans 457 residues: Argininosuccinate lyase (457 aa).

The protein belongs to the lyase 1 family. Argininosuccinate lyase subfamily.

Its subcellular location is the cytoplasm. The enzyme catalyses 2-(N(omega)-L-arginino)succinate = fumarate + L-arginine. Its pathway is amino-acid biosynthesis; L-arginine biosynthesis; L-arginine from L-ornithine and carbamoyl phosphate: step 3/3. The chain is Argininosuccinate lyase from Haemophilus influenzae (strain ATCC 51907 / DSM 11121 / KW20 / Rd).